Consider the following 440-residue polypeptide: Cell division protein FtsA (440 aa).

This sequence belongs to the FtsA/MreB family. Self-interacts. Interacts with FtsZ.

The protein resides in the cell membrane. Functionally, cell division protein that is involved in the assembly of the Z ring. May serve as a membrane anchor for the Z ring. The sequence is that of Cell division protein FtsA from Enterococcus faecalis (strain ATCC 700802 / V583).